The chain runs to 284 residues: Tropomyosin beta chain (284 aa).

Methionine 1 carries the post-translational modification N-acetylmethionine. Residues 1–65 (MDAIKKKMQM…EVEKYSESVK (65 aa)) form a disordered region. Residues 1–284 (MDAIKKKMQM…DNALNDITSL (284 aa)) are a coiled coil. 2 stretches are compositionally biased toward basic and acidic residues: residues 12–40 (KLDK…KQLE) and 51–65 (KGTE…ESVK). Residue threonine 53 is modified to Phosphothreonine. Serine 61 carries the phosphoserine; by PIK3CG modification. Threonine 79 is subject to Phosphothreonine. Serine 87 bears the Phosphoserine mark. Threonine 108 carries the post-translational modification Phosphothreonine. Positions 117–136 (EKAADESERGMKVIENRAMK) are disordered. Residues serine 158, serine 206, and serine 215 each carry the phosphoserine modification. At threonine 252 the chain carries Phosphothreonine. Tyrosine 261 carries the phosphotyrosine modification. Residue serine 271 is modified to Phosphoserine. The residue at position 282 (threonine 282) is a Phosphothreonine. Serine 283 bears the Phosphoserine mark.

The protein belongs to the tropomyosin family. In terms of assembly, homodimer. Heterodimer of an alpha (TPM1, TPM3 or TPM4) and a beta (TPM2) chain. Phosphorylated on Ser-61 by PIK3CG. Phosphorylation on Ser-61 is required for ADRB2 internalization. Present in primary breast cancer tissue, absent from normal breast tissue.

It is found in the cytoplasm. The protein localises to the cytoskeleton. Binds to actin filaments in muscle and non-muscle cells. Plays a central role, in association with the troponin complex, in the calcium dependent regulation of vertebrate striated muscle contraction. Smooth muscle contraction is regulated by interaction with caldesmon. In non-muscle cells is implicated in stabilizing cytoskeleton actin filaments. The non-muscle isoform may have a role in agonist-mediated receptor internalization. The polypeptide is Tropomyosin beta chain (TPM2) (Homo sapiens (Human)).